The chain runs to 164 residues: 4-hydroxy-4-methyl-2-oxoglutarate aldolase (164 aa).

Substrate contacts are provided by residues 74-77 (GGNL) and Arg96. Asp97 provides a ligand contact to a divalent metal cation.

It belongs to the class II aldolase/RraA-like family. As to quaternary structure, homotrimer. Requires Ni(2+) as cofactor. Co(2+) serves as cofactor. Zn(2+) is required as a cofactor.

It catalyses the reaction 4-hydroxy-4-methyl-2-oxoglutarate = 2 pyruvate. It carries out the reaction oxaloacetate + H(+) = pyruvate + CO2. Its activity is regulated as follows. Competitively inhibited by oxalate, a pyruvate enolate analog. Functionally, catalyzes the aldol cleavage of 4-hydroxy-4-methyl-2-oxoglutarate (HMG) into 2 molecules of pyruvate. Also contains a secondary oxaloacetate (OAA) decarboxylase activity due to the common pyruvate enolate transition state formed following C-C bond cleavage in the retro-aldol and decarboxylation reactions. In Thermus thermophilus (strain ATCC 27634 / DSM 579 / HB8), this protein is 4-hydroxy-4-methyl-2-oxoglutarate aldolase.